Here is a 273-residue protein sequence, read N- to C-terminus: Protein INAPERTURATE POLLEN1 (273 aa).

Residues 12 to 267 (SRRFNDFYED…KDQILLQDFE (256 aa)) enclose the DOG1 domain.

In terms of tissue distribution, expressed only in anthers and in pollen. Not detected in other flower tissues, stems, leaves and siliques.

Its subcellular location is the cytoplasm. Required for the formation of pollen surface apertures, which arise by restriction of exine deposition at specific sites. The aperture length depends on the INP1 dosage. Does not play a role in specifying the number or position of apertures. Acts in a sporophytic manner. This chain is Protein INAPERTURATE POLLEN1, found in Arabidopsis thaliana (Mouse-ear cress).